A 355-amino-acid chain; its full sequence is Capsular polysaccharide biosynthesis glycosyltransferase CapH (355 aa).

Belongs to the glycosyltransferase group 1 family. Glycosyltransferase 4 subfamily.

The protein operates within capsule biogenesis; capsule polysaccharide biosynthesis. Functionally, required for the biosynthesis of type 1 capsular polysaccharide. This chain is Capsular polysaccharide biosynthesis glycosyltransferase CapH (capH), found in Staphylococcus aureus.